The chain runs to 365 residues: D-alanine--D-alanine ligase (365 aa).

The ATP-grasp domain occupies 135–345; that stretch reads KLLLKSFNIP…YESLVDNLVS (211 aa). 168-223 is an ATP binding site; that stretch reads KQSLNYPVIVKPAMLGSSIGISIAYNDTQIEKCIEEAFEYDLTVVVEKFMKVREIE. 3 residues coordinate Mg(2+): D298, E312, and N314.

It belongs to the D-alanine--D-alanine ligase family. Requires Mg(2+) as cofactor. The cofactor is Mn(2+).

It localises to the cytoplasm. The catalysed reaction is 2 D-alanine + ATP = D-alanyl-D-alanine + ADP + phosphate + H(+). Its pathway is cell wall biogenesis; peptidoglycan biosynthesis. Functionally, cell wall formation. This Borrelia hermsii (strain HS1 / DAH) protein is D-alanine--D-alanine ligase.